A 126-amino-acid polypeptide reads, in one-letter code: Large ribosomal subunit protein bL12 (126 aa).

Belongs to the bacterial ribosomal protein bL12 family. As to quaternary structure, homodimer. Part of the ribosomal stalk of the 50S ribosomal subunit. Forms a multimeric L10(L12)X complex, where L10 forms an elongated spine to which 2 to 4 L12 dimers bind in a sequential fashion. Binds GTP-bound translation factors.

Functionally, forms part of the ribosomal stalk which helps the ribosome interact with GTP-bound translation factors. Is thus essential for accurate translation. The polypeptide is Large ribosomal subunit protein bL12 (Acidovorax ebreus (strain TPSY) (Diaphorobacter sp. (strain TPSY))).